Consider the following 457-residue polypeptide: Bifunctional protein GlmU (457 aa).

The segment at 1–230 (MPLSLPLHIV…AQEVEGVNDL (230 aa)) is pyrophosphorylase. Residues 12–15 (LAAG), Lys26, Gln78, 83–84 (GT), 105–107 (YGD), Gly140, Glu155, Asn170, and Asn228 contribute to the UDP-N-acetyl-alpha-D-glucosamine site. Mg(2+) is bound at residue Asp107. Position 228 (Asn228) interacts with Mg(2+). The segment at 231–251 (WQLTQLERAWQIRAARALCLQ) is linker. Residues 252 to 457 (GARVADPARL…DGWQRPKKKT (206 aa)) form an N-acetyltransferase region. Arg334 and Lys352 together coordinate UDP-N-acetyl-alpha-D-glucosamine. Catalysis depends on His364, which acts as the Proton acceptor. UDP-N-acetyl-alpha-D-glucosamine-binding residues include Tyr367 and Asn378. Acetyl-CoA contacts are provided by residues Ala381, 387-388 (NY), Ser406, Ala424, and Arg441.

In the N-terminal section; belongs to the N-acetylglucosamine-1-phosphate uridyltransferase family. It in the C-terminal section; belongs to the transferase hexapeptide repeat family. Homotrimer. Mg(2+) is required as a cofactor.

The protein localises to the cytoplasm. The enzyme catalyses alpha-D-glucosamine 1-phosphate + acetyl-CoA = N-acetyl-alpha-D-glucosamine 1-phosphate + CoA + H(+). It catalyses the reaction N-acetyl-alpha-D-glucosamine 1-phosphate + UTP + H(+) = UDP-N-acetyl-alpha-D-glucosamine + diphosphate. The protein operates within nucleotide-sugar biosynthesis; UDP-N-acetyl-alpha-D-glucosamine biosynthesis; N-acetyl-alpha-D-glucosamine 1-phosphate from alpha-D-glucosamine 6-phosphate (route II): step 2/2. It participates in nucleotide-sugar biosynthesis; UDP-N-acetyl-alpha-D-glucosamine biosynthesis; UDP-N-acetyl-alpha-D-glucosamine from N-acetyl-alpha-D-glucosamine 1-phosphate: step 1/1. It functions in the pathway bacterial outer membrane biogenesis; LPS lipid A biosynthesis. Catalyzes the last two sequential reactions in the de novo biosynthetic pathway for UDP-N-acetylglucosamine (UDP-GlcNAc). The C-terminal domain catalyzes the transfer of acetyl group from acetyl coenzyme A to glucosamine-1-phosphate (GlcN-1-P) to produce N-acetylglucosamine-1-phosphate (GlcNAc-1-P), which is converted into UDP-GlcNAc by the transfer of uridine 5-monophosphate (from uridine 5-triphosphate), a reaction catalyzed by the N-terminal domain. This chain is Bifunctional protein GlmU, found in Xylella fastidiosa (strain M23).